The sequence spans 88 residues: Small ribosomal subunit protein bS18 (88 aa).

Residues M1 to V22 are disordered.

Belongs to the bacterial ribosomal protein bS18 family. In terms of assembly, part of the 30S ribosomal subunit. Forms a tight heterodimer with protein bS6.

Functionally, binds as a heterodimer with protein bS6 to the central domain of the 16S rRNA, where it helps stabilize the platform of the 30S subunit. The chain is Small ribosomal subunit protein bS18 (rpsR) from Thermus thermophilus.